A 389-amino-acid polypeptide reads, in one-letter code: MEKAIRNFLSQESAGGILLLVAVVFAMLMANSPLSGLYQGFLGTDVQVRVGALDIHKPLLLWINDGLMALFFLLIGLEVKRELLEGALSSVAQASLPSFAAIGGMLVPAGIYLLFNYGDPVTQAGWAIPAATDIAFALGIMALLGNRVPVALKVFLLALAIIDDLGVIVIIALFYSSDLSTISLAIASVAILGLVGLNRKGITALTPYGILGLILWVAVLKSGVHATLAGVIIAFCIPLRAKDGSSPSEHLEHSLHPWSNFLILPVFAFANAGVALGNMSLDTLLSPVPIGIALGLILGKPIGVMLFSFIAVKLKLARLPDNVGWMQIAPVAAMCGIGFTMSMFIASLAFEQADPMYGDLARLGTLIGSFIAALVGYFWLSKVLPKKGV.

Helical transmembrane passes span 14 to 34 (AGGILLLVAVVFAMLMANSPL), 59 to 79 (LLLWINDGLMALFFLLIGLEV), 95 to 115 (SLPSFAAIGGMLVPAGIYLLF), 124 to 144 (AGWAIPAATDIAFALGIMALL), 154 to 174 (VFLLALAIIDDLGVIVIIALF), 177 to 197 (SDLSTISLAIASVAILGLVGL), 213 to 233 (LILWVAVLKSGVHATLAGVII), 261 to 281 (FLILPVFAFANAGVALGNMSL), 290 to 310 (IGIALGLILGKPIGVMLFSFI), 328 to 348 (IAPVAAMCGIGFTMSMFIASL), and 363 to 383 (LGTLIGSFIAALVGYFWLSKV).

Belongs to the NhaA Na(+)/H(+) (TC 2.A.33) antiporter family.

It localises to the cell inner membrane. The enzyme catalyses Na(+)(in) + 2 H(+)(out) = Na(+)(out) + 2 H(+)(in). Its function is as follows. Na(+)/H(+) antiporter that extrudes sodium in exchange for external protons. The sequence is that of Na(+)/H(+) antiporter NhaA from Shewanella sp. (strain W3-18-1).